The sequence spans 411 residues: MRAERLSPLLALGLLVAGIRSVHCLPENVVVKDRHRRVDGHTLASSNTDFAFSLYKQLALKNPNKNVMFSPLSVSMALAFLSLGARGPTLTEILEGLKFNLTEIQETQIHQGFQHLLQALNRPRNQLQLSVGNAMFVQEELKLLDKFIEDARVLYSSEAFPTNFRDPEAAKSLINDYVKNKTQGKIEELFKDLSPRTELVLVNYVYFKAQWKTRFDPKHTEQAEFHVSDNKTVEVPMMTLDLETPYFRDEELGCTLVELTYTSNDSALFILPDKGKMQDLEAKLTPEMLTRWRNSLQPRRIHELYLPKFSIKSNYELNDTLSQMGIKKIFTDADLSGITGTADLVVSQVVHGAALDVDEEGTEGAAATGIGIERTFLRIIVRVNRPFLIAVVLKDTQSIIFLGKVTNPSEA.

The N-terminal stretch at 1 to 24 is a signal peptide; sequence MRAERLSPLLALGLLVAGIRSVHC. Residues asparagine 100, asparagine 180, asparagine 230, asparagine 264, and asparagine 318 are each glycosylated (N-linked (GlcNAc...) asparagine).

This sequence belongs to the serpin family. As to quaternary structure, homodimer.

The protein localises to the cytoplasmic vesicle. Its subcellular location is the secretory vesicle. It localises to the chromaffin granule. The protein resides in the secreted. In terms of biological role, serine protease inhibitor. Strongly inhibits elastase and trypsin stoichiometrically at the molar ratio of 1:1. Acts as a moderate inhibitor of plasmin and chymotrypsin. Does not inhibit thrombin, urokinase, kallikrein, tissue plasminogen activator, cathepsin G or the cysteine proteases papain, cathepsin B or cathepsin L. The protein is Serpin A3-3 (SERPINA3-3) of Bos taurus (Bovine).